A 208-amino-acid chain; its full sequence is Octanoyltransferase (208 aa).

The 179-residue stretch at 30 to 208 (GTASEAVFIL…ILKQEFYKIF (179 aa)) folds into the BPL/LPL catalytic domain. Residues 69–76 (RGGKFTYH), 142–144 (SIG), and 155–157 (GVA) contribute to the substrate site. The active-site Acyl-thioester intermediate is the cysteine 173.

The protein belongs to the LipB family.

It is found in the cytoplasm. It catalyses the reaction octanoyl-[ACP] + L-lysyl-[protein] = N(6)-octanoyl-L-lysyl-[protein] + holo-[ACP] + H(+). It participates in protein modification; protein lipoylation via endogenous pathway; protein N(6)-(lipoyl)lysine from octanoyl-[acyl-carrier-protein]: step 1/2. Functionally, catalyzes the transfer of endogenously produced octanoic acid from octanoyl-acyl-carrier-protein onto the lipoyl domains of lipoate-dependent enzymes. Lipoyl-ACP can also act as a substrate although octanoyl-ACP is likely to be the physiological substrate. The chain is Octanoyltransferase from Orientia tsutsugamushi (strain Boryong) (Rickettsia tsutsugamushi).